Consider the following 193-residue polypeptide: Putative F-box protein At1g31072 (193 aa).

The 50-residue stretch at 4-53 (EKTLDSIPIDVFLDIFSRLPAKSVGRSCCVSNRWASILGSQDFKELFLTM) folds into the F-box domain.

In Arabidopsis thaliana (Mouse-ear cress), this protein is Putative F-box protein At1g31072.